Here is a 92-residue protein sequence, read N- to C-terminus: Large ribosomal subunit protein eL43z (92 aa).

The segment at 39–60 adopts a C4-type zinc-finger fold; the sequence is CEFCGKYSVKRKVVGIWGCKDC.

This sequence belongs to the eukaryotic ribosomal protein eL43 family.

The protein is Large ribosomal subunit protein eL43z (RPL37AB) of Arabidopsis thaliana (Mouse-ear cress).